A 212-amino-acid chain; its full sequence is ER lumen protein-retaining receptor 2 (212 aa).

At 1–4 (MNIF) the chain is on the lumenal side. A helical membrane pass occupies residues 5-24 (RLTGDLSHLAAIIILLLKIW). Residues 25–32 (KSRSCAGI) are Cytoplasmic-facing. A helical transmembrane segment spans residues 33-52 (SGKSQILFALVFTTRYLDLL). The segment at 47-48 (RY) is interaction with the K-D-E-L motif on target proteins. At 53–58 (TSFISL) the chain is on the lumenal side. A helical transmembrane segment spans residues 59–79 (YNTCMKVIYIGCAYATVYLIY). Topologically, residues 80-92 (AKFRATYDGNHDT) are cytoplasmic. Residues 93-110 (FRAEFLVVPVGGLAFLVN) form a helical membrane-spanning segment. Topologically, residues 111–116 (HDFSPL) are lumenal. Residues 117–135 (EILWTFSIYLESVAILPQL) traverse the membrane as a helical segment. At 136-149 (FMISKTGEAETITT) the chain is on the cytoplasmic side. Residues 150-168 (HYLFCLGVYRALYLFNWIW) traverse the membrane as a helical segment. Residues 159-169 (RALYLFNWIWR) are interaction with the K-D-E-L motif on target proteins. Topologically, residues 169–178 (RFYFEGFFDM) are lumenal. Residues 179-199 (IAIVAGVVQTILYCDFFYLYV) form a helical membrane-spanning segment. Residues 200 to 212 (TKVLKGKKLSLPA) lie on the Cytoplasmic side of the membrane. The interval 204–207 (KGKK) is important for recycling of cargo proteins with the sequence motif K-D-E-L from the Golgi to the endoplasmic reticulum.

This sequence belongs to the ERD2 family.

The protein resides in the endoplasmic reticulum membrane. It is found in the golgi apparatus membrane. The protein localises to the cytoplasmic vesicle. It localises to the COPI-coated vesicle membrane. In terms of biological role, receptor for the C-terminal sequence motif K-D-E-L that is present on endoplasmic reticulum resident proteins and that mediates their recycling from the Golgi back to the endoplasmic reticulum. Binding is pH dependent, and is optimal at pH 5-5.4. This Danio rerio (Zebrafish) protein is ER lumen protein-retaining receptor 2 (kdelr2).